Reading from the N-terminus, the 149-residue chain is Large ribosomal subunit protein bL9 (149 aa).

It belongs to the bacterial ribosomal protein bL9 family.

Functionally, binds to the 23S rRNA. This chain is Large ribosomal subunit protein bL9, found in Sulfurihydrogenibium sp. (strain YO3AOP1).